Consider the following 101-residue polypeptide: Urease subunit beta (101 aa).

It belongs to the urease beta subunit family. In terms of assembly, heterotrimer of UreA (gamma), UreB (beta) and UreC (alpha) subunits. Three heterotrimers associate to form the active enzyme.

It localises to the cytoplasm. The catalysed reaction is urea + 2 H2O + H(+) = hydrogencarbonate + 2 NH4(+). The protein operates within nitrogen metabolism; urea degradation; CO(2) and NH(3) from urea (urease route): step 1/1. The chain is Urease subunit beta from Haemophilus influenzae (strain 86-028NP).